Consider the following 947-residue polypeptide: Protein NETWORKED 2A (947 aa).

Residues 10-90 form the NAB domain; that stretch reads YSWWWASHIR…ERYDHLSREL (81 aa). Positions 105-131 are disordered; sequence VQFPLEDDSDENEDYDGRPRKPPKHLH. The span at 109–118 shows a compositional bias: acidic residues; it reads LEDDSDENED. Coiled coils occupy residues 348-454 and 568-619; these read KLAE…IQDV and VLRD…QKLD. 2 stretches are compositionally biased toward basic and acidic residues: residues 618–627 and 635–644; these read LDTTGKDSPH and LEHEQGHHET. 3 disordered regions span residues 618-675, 743-763, and 911-947; these read LDTT…RTKS, RIESKQQQESPRSSSNTAVAS, and KNRQQKQSASSLFSCVSPSPGLHKQSSYSRPPGKLPE. The span at 645-660 shows a compositional bias: polar residues; it reads VSISPTSNFSVATTPH. Basic and acidic residues predominate over residues 662-675; the sequence is QVGDVKRTPGRTKS. Residues 722–809 are a coiled coil; sequence VHQIQKYQTT…LANIQEEIAR (88 aa). Composition is skewed to polar residues over residues 749-761 and 915-927; these read QQESPRSSSNTAV and QKQSASSLFSCVS.

Belongs to the NET family. Expressed specifically in pollen.

The protein localises to the cell membrane. Plant-specific actin binding protein. Associates with F-actin at the plasma membrane in growing pollen tubes. May be part of a membrane-cytoskeletal adapter complex. The protein is Protein NETWORKED 2A of Arabidopsis thaliana (Mouse-ear cress).